A 361-amino-acid chain; its full sequence is 3-dehydroquinate synthase (361 aa).

Residues Gly-104–Asp-108, Thr-128–Thr-129, Lys-141, Lys-150, and Phe-168–Thr-171 each bind NAD(+). Zn(2+)-binding residues include Glu-183, His-246, and His-263.

This sequence belongs to the sugar phosphate cyclases superfamily. Dehydroquinate synthase family. Co(2+) is required as a cofactor. It depends on Zn(2+) as a cofactor. The cofactor is NAD(+).

Its subcellular location is the cytoplasm. The catalysed reaction is 7-phospho-2-dehydro-3-deoxy-D-arabino-heptonate = 3-dehydroquinate + phosphate. The protein operates within metabolic intermediate biosynthesis; chorismate biosynthesis; chorismate from D-erythrose 4-phosphate and phosphoenolpyruvate: step 2/7. Its function is as follows. Catalyzes the conversion of 3-deoxy-D-arabino-heptulosonate 7-phosphate (DAHP) to dehydroquinate (DHQ). This is 3-dehydroquinate synthase from Opitutus terrae (strain DSM 11246 / JCM 15787 / PB90-1).